Reading from the N-terminus, the 68-residue chain is Conotoxin Mi11.1 (68 aa).

The signal sequence occupies residues 1-26 (MMLRLTSVSCFLLVIACLNLFQVVLT). 4 disulfide bridges follow: Cys29–Cys43, Cys36–Cys48, Cys42–Cys52, and Cys47–Cys56. Tyrosine amide is present on Tyr60. Positions 64–68 (ATFQE) are excised as a propeptide.

Belongs to the conotoxin I2 superfamily. In terms of tissue distribution, expressed by the venom duct.

The protein resides in the secreted. This chain is Conotoxin Mi11.1, found in Conus miles (Soldier cone).